A 725-amino-acid chain; its full sequence is Ophiobolin F synthase (725 aa).

The tract at residues 1-322 (MEYKYSTIVD…RYHADAKFNE (322 aa)) is (7Z)-ophiobola-7,19-dien-3-ol synthase. Mg(2+) contacts are provided by Asp-93 and Asp-97. Position 93 (Asp-93) interacts with substrate. A DDXXD 1 motif is present at residues 93–97 (DDEID). Substrate contacts are provided by residues 182–185 (RCMD), Asn-226, 230–234 (SYEKE), and 313–314 (RY). The short motif at 226–234 (NDLFSYEKE) is the NSE/DTE element. The geranylfarnesyl diphosphate synthase stretch occupies residues 323–725 (LQMLRAEHGV…LRMMLELLKV (403 aa)). The segment at 362–388 (GVNGVNGKRKRSGEETADDARTNGNGI) is disordered. Over residues 373–382 (SGEETADDAR) the composition is skewed to basic and acidic residues. The isopentenyl diphosphate site is built by Lys-436, Arg-439, and His-468. Mg(2+) is bound by residues Asp-475 and Asp-479. A DDXXD 2 motif is present at residues 475–479 (DDIED). Arg-484 provides a ligand contact to dimethylallyl diphosphate. Isopentenyl diphosphate is bound at residue Arg-485. Dimethylallyl diphosphate contacts are provided by Lys-562, Thr-563, Gln-601, Asn-608, Lys-618, and Lys-628.

The protein in the N-terminal section; belongs to the terpene synthase family. In the C-terminal section; belongs to the FPP/GGPP synthase family. The cofactor is Mg(2+).

The enzyme catalyses isopentenyl diphosphate + (2E,6E)-farnesyl diphosphate = (2E,6E,10E)-geranylgeranyl diphosphate + diphosphate. It catalyses the reaction isopentenyl diphosphate + (2E,6E,10E)-geranylgeranyl diphosphate = (2E,6E,10E,14E)-geranylfarnesyl diphosphate + diphosphate. The catalysed reaction is (2E,6E,10E,14E)-geranylfarnesyl diphosphate + H2O = ophiobolin F + diphosphate. It participates in secondary metabolite biosynthesis; terpenoid biosynthesis. Bifunctional sesterterpene synthase that converts isopentenyl diphosphate (IPP) and dimethylallyl diphosphate (DMAPP) into ophiobolin F. The C-terminal prenyltransferase (PT) domain of AcldOS converts isopentenyl diphosphate and dimethylallyl diphosphate into geranylfarnesyl diphosphate (GFPP), whereas the N-terminal terpene cyclase (TC) domain catalyzes the cyclization of GFPP to ophiobolin F. The polypeptide is Ophiobolin F synthase (Aspergillus calidoustus).